The sequence spans 655 residues: FYVE, RhoGEF and PH domain-containing protein 2 (655 aa).

A phosphoserine mark is found at Ser10, Ser39, and Ser47. 2 disordered regions span residues 21–52 and 84–103; these read NRTP…EPWE and WRRS…EPEE. Residues 32–41 are compositionally biased toward basic and acidic residues; sequence SLEDQPHSPE. A DH domain is found at 102–290; that stretch reads EEKRVVRELL…FSAAQHSNAA (189 aa). The PH 1 domain occupies 319–418; the sequence is TLLREGPVLK…WMQACQAAID (100 aa). Residues 458–518 form an FYVE-type zinc finger; the sequence is DKMVTMCMRC…VCLTCYTFLT (61 aa). The Zn(2+) site is built by Cys464, Cys467, Cys481, Cys484, Cys489, Cys492, Cys510, and Cys513. The 98-residue stretch at 544 to 641 folds into the PH 2 domain; that stretch reads QSLVCSFLQL…WVTAIKRAAS (98 aa). Residue Thr644 is modified to Phosphothreonine. Phosphoserine is present on Ser654.

In terms of tissue distribution, lymph node, spleen, B-lymphocytes and macrophages (at protein level). Expressed at high levels in lymph node, spleen, B-lymphocytes and bone marrow macrophages. Expressed at lower levels in mature bone marrow dendritic cells. In both immature and mature B-cells, expression is down-regulated by prior B-cell receptor signaling. Expression remains high in resting B and memory cells but declines upon differentiation into plasma cells.

It localises to the cytoplasm. It is found in the nucleus. The protein localises to the early endosome. The protein resides in the early endosome membrane. Its subcellular location is the cell projection. It localises to the ruffle membrane. It is found in the cytoskeleton. In terms of biological role, activates CDC42, a member of the Ras-like family of Rho- and Rac proteins, by exchanging bound GDP for free GTP. Activates JNK1 via CDC42 but not RAC1. Binds to phosphatidylinositol 4,5-bisphosphate, phosphatidylinositol 3,4,5-trisphosphate, phosphatidylinositol 5-monophosphate, phosphatidylinositol 4-monophosphate and phosphatidylinositol 3-monophosphate. The sequence is that of FYVE, RhoGEF and PH domain-containing protein 2 (Fgd2) from Mus musculus (Mouse).